A 319-amino-acid chain; its full sequence is Acetyl-coenzyme A carboxylase carboxyl transferase subunit alpha (319 aa).

The 262-residue stretch at 32–293 folds into the CoA carboxyltransferase C-terminal domain; it reads NVETEVRALR…KAVLLNELDA (262 aa).

The protein belongs to the AccA family. In terms of assembly, acetyl-CoA carboxylase is a heterohexamer composed of biotin carboxyl carrier protein (AccB), biotin carboxylase (AccC) and two subunits each of ACCase subunit alpha (AccA) and ACCase subunit beta (AccD).

Its subcellular location is the cytoplasm. It carries out the reaction N(6)-carboxybiotinyl-L-lysyl-[protein] + acetyl-CoA = N(6)-biotinyl-L-lysyl-[protein] + malonyl-CoA. It participates in lipid metabolism; malonyl-CoA biosynthesis; malonyl-CoA from acetyl-CoA: step 1/1. In terms of biological role, component of the acetyl coenzyme A carboxylase (ACC) complex. First, biotin carboxylase catalyzes the carboxylation of biotin on its carrier protein (BCCP) and then the CO(2) group is transferred by the carboxyltransferase to acetyl-CoA to form malonyl-CoA. The sequence is that of Acetyl-coenzyme A carboxylase carboxyl transferase subunit alpha from Xanthomonas axonopodis pv. citri (strain 306).